A 100-amino-acid polypeptide reads, in one-letter code: UPF0235 protein NE0395 (100 aa).

The protein belongs to the UPF0235 family.

The sequence is that of UPF0235 protein NE0395 from Nitrosomonas europaea (strain ATCC 19718 / CIP 103999 / KCTC 2705 / NBRC 14298).